The sequence spans 498 residues: Protein flp (498 aa).

The next 4 helical transmembrane spans lie at 6 to 26 (LYFL…IYIT), 389 to 409 (FNIV…FSAY), 433 to 453 (LSLC…YLIL), and 471 to 491 (LALI…LLFL).

The protein localises to the cell membrane. Its function is as follows. Its precise function is unknown. Has no penicillin-binding activity and is not involved in methicillin resistance. This chain is Protein flp (flp), found in Staphylococcus aureus (strain NCTC 8325 / PS 47).